Here is a 567-residue protein sequence, read N- to C-terminus: Diphtheria toxin (567 aa).

An N-terminal signal peptide occupies residues 1–32 (MLVRGYVVSRKLFASILIGALLGIGAPPSAHA). The NAD(+) site is built by His-53 and Tyr-97. Glu-180 is an active-site residue. 2 disulfides stabilise this stretch: Cys-218-Cys-233 and Cys-493-Cys-503.

In terms of assembly, homodimer. Post-translationally, proteolytic activation by host furin cleaves the protein in two parts, Diphtheria toxin fragment A and Diphtheria toxin fragment B; which remain associated via a disulfide bond.

The enzyme catalyses diphthamide-[translation elongation factor 2] + NAD(+) = N-(ADP-D-ribosyl)diphthamide-[translation elongation factor 2] + nicotinamide + H(+). Its activity is regulated as follows. Partially inhibited by 1,8-naphthalimide (NAP). Its function is as follows. Diphtheria toxin, produced by a phage infecting Corynebacterium diphtheriae, is a proenzyme that, after activation, catalyzes the covalent attachment of the ADP ribose moiety of NAD to eukaryotic elongation factor 2 (eEF-2). Fragment A is the catalytic portion responsible for enzymatic ADP-ribosylation of elongation factor 2, while fragment B is responsible for binding of toxin to cell receptors and entry of fragment A. The protein is Diphtheria toxin of Corynebacterium diphtheriae.